Reading from the N-terminus, the 419-residue chain is Tyrosine--tRNA ligase 2 (419 aa).

Position 34 (Tyr-34) interacts with L-tyrosine. The 'HIGH' region motif lies at 39 to 48; it reads PTGDSMHIGH. Residues Tyr-168 and Gln-172 each contribute to the L-tyrosine site. Positions 230–234 match the 'KMSKS' region motif; it reads KFGKS. Lys-233 is an ATP binding site. The 67-residue stretch at 352-418 folds into the S4 RNA-binding domain; sequence KNIVEWLVDL…GKKNYSLVKL (67 aa).

It belongs to the class-I aminoacyl-tRNA synthetase family. TyrS type 1 subfamily. Homodimer.

It localises to the cytoplasm. The catalysed reaction is tRNA(Tyr) + L-tyrosine + ATP = L-tyrosyl-tRNA(Tyr) + AMP + diphosphate + H(+). Catalyzes the attachment of tyrosine to tRNA(Tyr) in a two-step reaction: tyrosine is first activated by ATP to form Tyr-AMP and then transferred to the acceptor end of tRNA(Tyr). The protein is Tyrosine--tRNA ligase 2 of Bacillus anthracis.